The sequence spans 217 residues: Adenylate kinase (217 aa).

Glycine 10 to threonine 15 serves as a coordination point for ATP. The interval serine 30–valine 59 is NMP. AMP-binding positions include threonine 31, arginine 36, alanine 57–valine 59, glycine 85–arginine 88, and glutamine 92. The interval serine 126–aspartate 163 is LID. Arginine 127 contributes to the ATP binding site. Zn(2+) contacts are provided by cysteine 130 and cysteine 133. ATP is bound at residue isoleucine 136–tyrosine 137. Residues cysteine 150 and cysteine 153 each coordinate Zn(2+). The AMP site is built by arginine 160 and arginine 171. Arginine 199 is an ATP binding site.

This sequence belongs to the adenylate kinase family. As to quaternary structure, monomer.

It is found in the cytoplasm. The catalysed reaction is AMP + ATP = 2 ADP. It participates in purine metabolism; AMP biosynthesis via salvage pathway; AMP from ADP: step 1/1. Its function is as follows. Catalyzes the reversible transfer of the terminal phosphate group between ATP and AMP. Plays an important role in cellular energy homeostasis and in adenine nucleotide metabolism. This chain is Adenylate kinase, found in Pseudothermotoga lettingae (strain ATCC BAA-301 / DSM 14385 / NBRC 107922 / TMO) (Thermotoga lettingae).